The chain runs to 58 residues: Sodium/potassium-transporting ATPase subunit gamma (58 aa).

Residues 20-39 form a helical membrane-spanning segment; it reads NGGLIFAALAFIVGLVIILS.

This sequence belongs to the FXYD family. As to quaternary structure, regulatory subunit of the sodium/potassium-transporting ATPase which is composed of a catalytic alpha subunit, an auxiliary non-catalytic beta subunit and an additional regulatory subunit. As to expression, highest levels expressed in the kidney and spleen. Restricted to the basolateral membrane in renal epithelial cells and varies in its level of expression along the nephron.

It is found in the membrane. In terms of biological role, may be involved in forming the receptor site for cardiac glycoside binding or may modulate the transport function of the sodium ATPase. The chain is Sodium/potassium-transporting ATPase subunit gamma (FXYD2) from Bos taurus (Bovine).